Consider the following 122-residue polypeptide: Large ribosomal subunit protein eL22B (122 aa).

This sequence belongs to the eukaryotic ribosomal protein eL22 family. As to quaternary structure, component of the large ribosomal subunit (LSU). Mature yeast ribosomes consist of a small (40S) and a large (60S) subunit. The 40S small subunit contains 1 molecule of ribosomal RNA (18S rRNA) and 33 different proteins (encoded by 57 genes). The large 60S subunit contains 3 rRNA molecules (25S, 5.8S and 5S rRNA) and 46 different proteins (encoded by 81 genes).

Its subcellular location is the cytoplasm. In terms of biological role, component of the ribosome, a large ribonucleoprotein complex responsible for the synthesis of proteins in the cell. The small ribosomal subunit (SSU) binds messenger RNAs (mRNAs) and translates the encoded message by selecting cognate aminoacyl-transfer RNA (tRNA) molecules. The large subunit (LSU) contains the ribosomal catalytic site termed the peptidyl transferase center (PTC), which catalyzes the formation of peptide bonds, thereby polymerizing the amino acids delivered by tRNAs into a polypeptide chain. The nascent polypeptides leave the ribosome through a tunnel in the LSU and interact with protein factors that function in enzymatic processing, targeting, and the membrane insertion of nascent chains at the exit of the ribosomal tunnel. This Saccharomyces cerevisiae (strain ATCC 204508 / S288c) (Baker's yeast) protein is Large ribosomal subunit protein eL22B.